Here is a 367-residue protein sequence, read N- to C-terminus: uncharacterized protein (367 aa).

4 consecutive transmembrane segments (helical) span residues 35–55 (YVYD…IILW), 61–81 (LALF…TLLV), 92–112 (EVAD…TAAG), and 113–133 (LMFS…PLFL). Disordered stretches follow at residues 177–220 (KLPK…PASI), 249–283 (SNIK…YYTP), and 296–367 (GDIS…SRPK). Residues 257–274 (NTKSILHTPLNRRSPSGS) show a composition bias toward polar residues. The segment covering 302-312 (SSSSTSSKTST) has biased composition (low complexity). Residues 323–342 (SRSERNARHHRNKEDHRQNQ) show a composition bias toward basic and acidic residues. The segment covering 357–367 (PRRKKYRSRPK) has biased composition (basic residues).

Belongs to the chlamydial CPn_0443/CT_005/TC_0273 family.

It localises to the cell membrane. This is an uncharacterized protein from Chlamydia muridarum (strain MoPn / Nigg).